The sequence spans 321 residues: Ferredoxin--NADP reductase (321 aa).

Residues Glu33, Gln41, Tyr46, Val86, Leu119, Asp277, and Ser318 each contribute to the FAD site.

This sequence belongs to the ferredoxin--NADP reductase type 2 family. As to quaternary structure, homodimer. The cofactor is FAD.

The enzyme catalyses 2 reduced [2Fe-2S]-[ferredoxin] + NADP(+) + H(+) = 2 oxidized [2Fe-2S]-[ferredoxin] + NADPH. This Lactococcus lactis subsp. lactis (strain IL1403) (Streptococcus lactis) protein is Ferredoxin--NADP reductase.